A 106-amino-acid polypeptide reads, in one-letter code: Toxin-like structure LSTX-D5 (106 aa).

Residues 1–20 form the signal peptide; that stretch reads MMKVLVVVALLVTLISYSSS. A propeptide spanning residues 21-41 is cleaved from the precursor; sequence EGIDDLETDELLSLMANEQTR. Intrachain disulfides connect Cys-45–Cys-60, Cys-52–Cys-69, Cys-59–Cys-85, and Cys-71–Cys-83.

It belongs to the neurotoxin 19 (CSTX) family. 02 (D7) subfamily. Expressed by the venom gland.

The protein localises to the secreted. The protein is Toxin-like structure LSTX-D5 of Lycosa singoriensis (Wolf spider).